Reading from the N-terminus, the 551-residue chain is Glucans biosynthesis protein D (551 aa).

A signal peptide (tat-type signal) is located at residues 1–32 (MDRRRFIKGSMAMAAVCGTSGIASLFSQAAFA).

It belongs to the OpgD/OpgG family. Post-translationally, predicted to be exported by the Tat system. The position of the signal peptide cleavage has not been experimentally proven.

The protein localises to the periplasm. Its pathway is glycan metabolism; osmoregulated periplasmic glucan (OPG) biosynthesis. Functionally, probably involved in the control of the structural glucose backbone of osmoregulated periplasmic glucans (OPGs). This chain is Glucans biosynthesis protein D, found in Shigella dysenteriae serotype 1 (strain Sd197).